Here is a 429-residue protein sequence, read N- to C-terminus: Chaperone SurA (429 aa).

The signal sequence occupies residues 1–19 (MKKTLLALLIASVMQSALA). PpiC domains are found at residues 172–273 (RTEY…KLVD) and 283–381 (VEQY…LVEG).

The protein resides in the periplasm. It catalyses the reaction [protein]-peptidylproline (omega=180) = [protein]-peptidylproline (omega=0). Chaperone involved in the correct folding and assembly of outer membrane proteins. Recognizes specific patterns of aromatic residues and the orientation of their side chains, which are found more frequently in integral outer membrane proteins. May act in both early periplasmic and late outer membrane-associated steps of protein maturation. The protein is Chaperone SurA of Chromobacterium violaceum (strain ATCC 12472 / DSM 30191 / JCM 1249 / CCUG 213 / NBRC 12614 / NCIMB 9131 / NCTC 9757 / MK).